The primary structure comprises 392 residues: NDP-glycosyltransferase YjiC (392 aa).

UDP-binding positions include Asn-18, Thr-229, Ser-255, Val-278, His-293, and 297 to 301 (NSTME).

Belongs to the UDP-glycosyltransferase family. As to quaternary structure, monomer.

It carries out the reaction an NDP-glycose + an acceptor = a glycosylated acceptor + NDP.. With respect to regulation, activity is improved in the presence of Mn(2+), Mg(2+) and Ca(2+), and inhibited by Ni(2+), Zn(2+) and Cu(2+). Glycosyltransferase that can glycosylate a wide range of substrates, including various flavonoids, phenyl ketones, curcuminoid, lignins, zingerone, triterpenes, stilbene and anthraquinone, using UDP-glucose or ADP-glucose as sugar donor. It also exhibits O-, N- and S-glycosylation activities towards simple aromatics. In vivo, the broad acceptor tolerance of YjiC might function as a detoxification agent against exogenous xenobiotics to make the strain adaptable to the changeable environment. This chain is NDP-glycosyltransferase YjiC (yjiC), found in Bacillus subtilis (strain 168).